The primary structure comprises 82 residues: Polyferredoxin protein FwdG (82 aa).

2 consecutive 4Fe-4S ferredoxin-type domains span residues 4 to 33 (YELV…PETW) and 51 to 80 (VVTV…LVFK). The [4Fe-4S] cluster site is built by Cys-13, Cys-16, Cys-19, Cys-23, Cys-60, Cys-63, Cys-66, and Cys-70.

[4Fe-4S] cluster serves as cofactor.

The sequence is that of Polyferredoxin protein FwdG (fwdG) from Methanocaldococcus jannaschii (strain ATCC 43067 / DSM 2661 / JAL-1 / JCM 10045 / NBRC 100440) (Methanococcus jannaschii).